The chain runs to 456 residues: Frizzled/smoothened-like sans CRD protein F (456 aa).

Residues 1–30 (MIFNNLKNQNKIINFLIIFYFLSFLKQIES) form the signal peptide. Residues 31-92 (QSINITSSSS…PFFTINEWNK (62 aa)) lie on the Extracellular side of the membrane. 3 N-linked (GlcNAc...) asparagine glycosylation sites follow: N34, N52, and N70. A helical membrane pass occupies residues 93 to 113 (FLNMSLVMGTISFFSGLFLLV). Residues 114–127 (TYSPIVNKTHNRHT) are Cytoplasmic-facing. The chain crosses the membrane as a helical span at residues 128–148 (IGVMCMSFGVCLAMCSDMWNF). Residues 149-174 (GSNFTEKSICPSPGQYLSTSNARCLS) lie on the Extracellular side of the membrane. N151 carries an N-linked (GlcNAc...) asparagine glycan. The helical transmembrane segment at 175–195 (SGIFLQFGGVFGFLNWTLLSF) threads the bilayer. Residues 196–211 (DLFMNIKGIITKNYDK) lie on the Cytoplasmic side of the membrane. Residues 212-232 (YYVSGTFIIAIIFTFVPIVND) traverse the membrane as a helical segment. The Extracellular portion of the chain corresponds to 233-252 (QYSMSYIGLGCWLGSAMYQL). The chain crosses the membrane as a helical span at residues 253-273 (IFFWILLSICLIVSSVFIILI). Residues 274 to 297 (LKEVYIIIKLSKQKTSLKGNIRPL) are Cytoplasmic-facing. Residues 298 to 318 (ICISITGFAFFYMFFYYISIV) traverse the membrane as a helical segment. At 319 to 354 (VEGDYYERVLNEYTDCLMDPTKDISECKSPRMSVAS) the chain is on the extracellular side. Residues 355–375 (EFVFLLCLRLLGIGAFIFYGI) form a helical membrane-spanning segment. The Cytoplasmic portion of the chain corresponds to 376–456 (NNKVKKIWLN…ESSLNSVDEI (81 aa)). The interval 403–422 (ADNDKSNSNGSKVLYRTNNT) is disordered.

It belongs to the G-protein coupled receptor Fz/Smo family.

It localises to the membrane. The polypeptide is Frizzled/smoothened-like sans CRD protein F (fscF) (Dictyostelium discoideum (Social amoeba)).